Reading from the N-terminus, the 369-residue chain is Terpene cyclase DEP1 (369 aa).

The next 8 helical transmembrane spans lie at 9–29, 82–102, 118–138, 157–177, 190–210, 234–254, 298–318, and 342–362; these read FFYL…FNGM, LLFF…LIES, AMVL…LYLV, ALLV…VPAW, IALF…LASI, LVLA…GALI, LFSQ…SHLL, and LVYL…SFAL.

This sequence belongs to the membrane-bound ascI terpene cyclase family.

It is found in the membrane. It functions in the pathway polyketide biosynthesis. Functionally, part of the gene cluster that mediates the biosynthesis of depudecin, a highly oxidized eleven-carbon linear polyketide that acts as a histone deacetylase (HDAC) inhibitor and makes a small contribution to pathogenesis. The reducing polyketide synthase DEP5 is the central enzyme in depudecin biosynthesis by yielding the backbone polyketide chain. The monooxygenases DEP2 and DEP4, as well as the uncharacterized protein DEP1, then act as tailoring enzymes to modify the intermediate polyketide chain into depudecin. The sequence is that of Terpene cyclase DEP1 from Alternaria brassicicola (Dark leaf spot agent).